Reading from the N-terminus, the 304-residue chain is Aspartate carbamoyltransferase catalytic subunit (304 aa).

Carbamoyl phosphate is bound by residues R55 and T56. Residue K84 coordinates L-aspartate. R105, H133, and Q136 together coordinate carbamoyl phosphate. R165 and R226 together coordinate L-aspartate. 2 residues coordinate carbamoyl phosphate: L265 and P266.

Belongs to the aspartate/ornithine carbamoyltransferase superfamily. ATCase family. Heterooligomer of catalytic and regulatory chains.

It carries out the reaction carbamoyl phosphate + L-aspartate = N-carbamoyl-L-aspartate + phosphate + H(+). It participates in pyrimidine metabolism; UMP biosynthesis via de novo pathway; (S)-dihydroorotate from bicarbonate: step 2/3. Its function is as follows. Catalyzes the condensation of carbamoyl phosphate and aspartate to form carbamoyl aspartate and inorganic phosphate, the committed step in the de novo pyrimidine nucleotide biosynthesis pathway. The sequence is that of Aspartate carbamoyltransferase catalytic subunit from Methanothrix thermoacetophila (strain DSM 6194 / JCM 14653 / NBRC 101360 / PT) (Methanosaeta thermophila).